Reading from the N-terminus, the 638-residue chain is Carbon monoxide dehydrogenase (638 aa).

5 residues coordinate [4Fe-4S] cluster: Cys-46, Cys-55, Cys-58, Cys-63, and Cys-74. Residues His-265, Cys-299, Cys-343, Cys-452, Cys-483, and Cys-524 each coordinate [Ni-4Fe-5S] cluster.

This sequence belongs to the Ni-containing carbon monoxide dehydrogenase family. Homodimer. It depends on [4Fe-4S] cluster as a cofactor. [Ni-4Fe-5S] cluster serves as cofactor.

It carries out the reaction CO + 2 oxidized [2Fe-2S]-[ferredoxin] + H2O = 2 reduced [2Fe-2S]-[ferredoxin] + CO2 + 2 H(+). CODH oxidizes carbon monoxide coupled, via CooF, to the reduction of a hydrogen cation by a hydrogenase (possibly CooH). The protein is Carbon monoxide dehydrogenase (cooS) of Methanopyrus kandleri (strain AV19 / DSM 6324 / JCM 9639 / NBRC 100938).